The chain runs to 572 residues: Terminal nucleotidyltransferase 4B (572 aa).

Positions 1 to 105 are disordered; that stretch reads MYRSGERLLG…ADGGGVVYSG (105 aa). A compositionally biased stretch (polar residues) spans 25-34; that stretch reads ETTNNNNNHH. The span at 36 to 76 shows a compositional bias: low complexity; it reads PGAWARRAGSSASSPPSASSSPHPSAAVPAADPADSASGSS. Residues 89 to 102 are compositionally biased toward gly residues; sequence RAAGGGRADGGGVV. Residue V151 forms a Glycyl lysine isopeptide (Lys-Gly) (interchain with G-Cter in SUMO2) linkage. Residues D177 and D179 each contribute to the Mg(2+) site. ATP contacts are provided by G240, K265, S283, Y284, N368, and R372. In terms of domain architecture, PAP-associated spans 308 to 368; the sequence is NYGVLLIEFF…YIEDPLQPGN (61 aa). Positions 435-572 are disordered; that stretch reads KNRPEPSCNG…RDAPLSDLCR (138 aa). A compositionally biased stretch (low complexity) spans 446–464; the sequence is VSSSSATQSSSSDVDSDAT. Residue K470 forms a Glycyl lysine isopeptide (Lys-Gly) (interchain with G-Cter in SUMO2) linkage. Residues 477–494 are compositionally biased toward polar residues; sequence STGNRVGSQDVSLESSQA. S484 carries the post-translational modification Phosphoserine. Residues K497, K512, and K526 each participate in a glycyl lysine isopeptide (Lys-Gly) (interchain with G-Cter in SUMO2) cross-link. Positions 499–514 are enriched in low complexity; the sequence is QSTQTTNTSNSTNKSQ. A compositionally biased stretch (polar residues) spans 522–553; the sequence is RSSSKGFQGTTQTSHGSLMTNKQHQGKSNNQY. The Basic, involved in binding of the RNA primer motif lies at 557-563; the sequence is KKRKHKR.

It belongs to the DNA polymerase type-B-like family. Component of a nucleolar TRAMP-like complex, an ATP-dependent exosome regulatory complex consisting of a helicase (MTREX), an oligadenylate polymerase (TENT4B or TENT4A), and a substrate specific RNA-binding factor (ZCCHC7 or ZCCHC8). Several TRAMP-like complexes exist with specific compositions and are associated with nuclear, or nucleolar RNA exosomes. Interacts with CPEB1; the interaction is required for TENT4B-mediated translational control. Mg(2+) serves as cofactor. Mn(2+) is required as a cofactor.

It is found in the nucleus. The protein resides in the nucleolus. The protein localises to the cytoplasm. The catalysed reaction is RNA(n) + ATP = RNA(n)-3'-adenine ribonucleotide + diphosphate. Functionally, terminal nucleotidyltransferase that catalyzes preferentially the transfer of ATP and GTP on RNA 3' poly(A) tail creating a heterogeneous 3' poly(A) tail leading to mRNAs stabilization by protecting mRNAs from active deadenylation. Also functions as a catalytic subunit of a TRAMP-like complex which has a poly(A) RNA polymerase activity and is involved in a post-transcriptional quality control mechanism. Polyadenylation with short oligo(A) tails is required for the degradative activity of the exosome on several of its nuclear RNA substrates. Doesn't need a cofactor for polyadenylation activity (in vitro). Required for cytoplasmic polyadenylation of mRNAs involved in carbohydrate metabolism, including the glucose transporter SLC2A1/GLUT1. Plays a role in replication-dependent histone mRNA degradation, probably through terminal uridylation of mature histone mRNAs. May play a role in sister chromatid cohesion. Mediates 3' adenylation of the microRNA MIR21 followed by its 3'-to-5' trimming by the exoribonuclease PARN leading to degradation. Mediates 3' adenylation of H/ACA box snoRNAs (small nucleolar RNAs) followed by its 3'-to-5' trimming by the exoribonuclease PARN which enhances snoRNA stability and maturation. The polypeptide is Terminal nucleotidyltransferase 4B (Homo sapiens (Human)).